We begin with the raw amino-acid sequence, 950 residues long: Glycine dehydrogenase (decarboxylating) (950 aa).

The residue at position 698 (lysine 698) is an N6-(pyridoxal phosphate)lysine.

The protein belongs to the GcvP family. As to quaternary structure, the glycine cleavage system is composed of four proteins: P, T, L and H. Pyridoxal 5'-phosphate is required as a cofactor.

The enzyme catalyses N(6)-[(R)-lipoyl]-L-lysyl-[glycine-cleavage complex H protein] + glycine + H(+) = N(6)-[(R)-S(8)-aminomethyldihydrolipoyl]-L-lysyl-[glycine-cleavage complex H protein] + CO2. Functionally, the glycine cleavage system catalyzes the degradation of glycine. The P protein binds the alpha-amino group of glycine through its pyridoxal phosphate cofactor; CO(2) is released and the remaining methylamine moiety is then transferred to the lipoamide cofactor of the H protein. The sequence is that of Glycine dehydrogenase (decarboxylating) from Neisseria gonorrhoeae (strain NCCP11945).